The sequence spans 1211 residues: Sterol 3-beta-glucosyltransferase (1211 aa).

A compositionally biased stretch (basic and acidic residues) spans Met1–Ser10. A disordered region spans residues Met1–Asp61. In terms of domain architecture, GRAM 1 spans Glu196–Leu235. Residues Val248–Phe347 enclose the PH domain. Disordered stretches follow at residues Leu422 to Arg452 and Val500 to Trp531. Acidic residues predominate over residues Thr423–Ser432. The span at Ser507–Ser525 shows a compositional bias: basic and acidic residues. Residues Ser586 to Lys652 form the GRAM 2 domain. UDP-alpha-D-glucose contacts are provided by Ser770, Arg771, Asp773, Asn1046, Asn1072, Val1073, His1075, His1088, Ser1091, Gly1092, Thr1093, Asp1112, and Gln1113.

This sequence belongs to the glycosyltransferase 28 family.

The protein localises to the cytoplasm. The protein resides in the preautophagosomal structure membrane. The enzyme catalyses a sterol + UDP-alpha-D-glucose = a sterol 3-beta-D-glucoside + UDP + H(+). It catalyses the reaction ergosterol + UDP-alpha-D-glucose = ergosteryl 3-beta-D-glucoside + UDP + H(+). In terms of biological role, sterol glycosyltransferase responsible for the glycosylation of ergosterol to form ergosterol-glucoside. Shows also activity in vitro on other sterols such as cholesterol, beta-sitosterol, stigmasterol and tomatidine. Probable sterol 3-beta-glucosyltransferase that mediates autophagic degradation of peroxisomes (pexophagy). In Komagataella phaffii (strain GS115 / ATCC 20864) (Yeast), this protein is Sterol 3-beta-glucosyltransferase.